We begin with the raw amino-acid sequence, 259 residues long: Cytochrome c oxidase subunit 3 (259 aa).

7 helical membrane passes run 13–33 (PWPL…TSWF), 36–56 (HGFI…FQWW), 80–100 (GMVL…WAYF), 125–145 (FQIP…VTWA), 154–174 (HAEA…FTLL), 195–215 (FFVA…FLLI), and 237–257 (AWYW…IYWW).

It belongs to the cytochrome c oxidase subunit 3 family. Component of the cytochrome c oxidase (complex IV, CIV), a multisubunit enzyme composed of a catalytic core of 3 subunits and several supernumerary subunits. The complex exists as a monomer or a dimer and forms supercomplexes (SCs) in the inner mitochondrial membrane with ubiquinol-cytochrome c oxidoreductase (cytochrome b-c1 complex, complex III, CIII).

The protein resides in the mitochondrion inner membrane. It carries out the reaction 4 Fe(II)-[cytochrome c] + O2 + 8 H(+)(in) = 4 Fe(III)-[cytochrome c] + 2 H2O + 4 H(+)(out). In terms of biological role, component of the cytochrome c oxidase, the last enzyme in the mitochondrial electron transport chain which drives oxidative phosphorylation. The respiratory chain contains 3 multisubunit complexes succinate dehydrogenase (complex II, CII), ubiquinol-cytochrome c oxidoreductase (cytochrome b-c1 complex, complex III, CIII) and cytochrome c oxidase (complex IV, CIV), that cooperate to transfer electrons derived from NADH and succinate to molecular oxygen, creating an electrochemical gradient over the inner membrane that drives transmembrane transport and the ATP synthase. Cytochrome c oxidase is the component of the respiratory chain that catalyzes the reduction of oxygen to water. Electrons originating from reduced cytochrome c in the intermembrane space (IMS) are transferred via the dinuclear copper A center (CU(A)) of subunit 2 and heme A of subunit 1 to the active site in subunit 1, a binuclear center (BNC) formed by heme A3 and copper B (CU(B)). The BNC reduces molecular oxygen to 2 water molecules using 4 electrons from cytochrome c in the IMS and 4 protons from the mitochondrial matrix. The sequence is that of Cytochrome c oxidase subunit 3 (COIII) from Heterololigo bleekeri (Spear squid).